The primary structure comprises 311 residues: Bifunctional protein FolD (311 aa).

NADP(+) contacts are provided by residues 180-182, Ser209, and Ile250; that span reads GRS.

Belongs to the tetrahydrofolate dehydrogenase/cyclohydrolase family. As to quaternary structure, homodimer.

It carries out the reaction (6R)-5,10-methylene-5,6,7,8-tetrahydrofolate + NADP(+) = (6R)-5,10-methenyltetrahydrofolate + NADPH. The enzyme catalyses (6R)-5,10-methenyltetrahydrofolate + H2O = (6R)-10-formyltetrahydrofolate + H(+). The protein operates within one-carbon metabolism; tetrahydrofolate interconversion. In terms of biological role, catalyzes the oxidation of 5,10-methylenetetrahydrofolate to 5,10-methenyltetrahydrofolate and then the hydrolysis of 5,10-methenyltetrahydrofolate to 10-formyltetrahydrofolate. This Haloquadratum walsbyi (strain DSM 16790 / HBSQ001) protein is Bifunctional protein FolD.